We begin with the raw amino-acid sequence, 1937 residues long: Myosin-2 (1937 aa).

The region spanning 33 to 82 is the Myosin N-terminal SH3-like domain; the sequence is DAKTSVFVAEPKESFVKGTIQSREGGKVTVKTDAGATLTVKEDQVFPMNP. Phosphothreonine occurs at positions 64 and 69. The Myosin motor domain maps to 86-780; that stretch reads DKIEDMAMMT…LLGLLEEMRD (695 aa). Position 130 is an N6,N6,N6-trimethyllysine (K130). 179-186 lines the ATP pocket; sequence GESGAGKT. Phosphotyrosine is present on Y387. T417 is modified (phosphothreonine). Residue S623 is modified to Phosphoserine. The actin-binding stretch occupies residues 657–679; that stretch reads LNKLMTNLRSTHPHFVRCIIPNE. H755 bears the Pros-methylhistidine mark. Residues 759–773 are actin-binding; that stretch reads KFGHTKVFFKAGLLG. The region spanning 783-812 is the IQ domain; sequence LAQIITRTQARCRGFLARVEYQKMVERRES. Residues 841–1937 are a coiled coil; it reads LLKSAETEKE…EVHTKIISEE (1097 aa). The residue at position 1094 (S1094) is a Phosphoserine. Disordered stretches follow at residues 1124–1145 and 1151–1170; these read IEAE…SREL and RLEE…KKRE. Residues 1126-1145 are compositionally biased toward basic and acidic residues; that stretch reads AERASRAKAEKQRSDLSREL. Phosphoserine is present on residues S1160 and S1235. The residue at position 1239 (T1239) is a Phosphothreonine. S1241 bears the Phosphoserine mark. At T1253 the chain carries Phosphothreonine. S1259 is modified (phosphoserine). Phosphothreonine is present on T1284. S1290, S1301, and S1304 each carry phosphoserine. Y1462 carries the phosphotyrosine modification. T1465 is modified (phosphothreonine). The residue at position 1472 (S1472) is a Phosphoserine. Y1490 is modified (phosphotyrosine). Position 1493 is a phosphoserine (S1493). T1499 is modified (phosphothreonine). S1512 carries the post-translational modification Phosphoserine. Residue T1515 is modified to Phosphothreonine. Residues S1540, S1552, S1572, S1712, and S1724 each carry the phosphoserine modification. Residues T1728 and T1734 each carry the phosphothreonine modification. S1737 is modified (phosphoserine). Positions 1883–1913 are disordered; sequence QAEEAEEQSNTNLSKFRKLQHELEEAEERAD.

It belongs to the TRAFAC class myosin-kinesin ATPase superfamily. Myosin family. As to quaternary structure, muscle myosin is a hexameric protein that consists of 2 heavy chain subunits (MHC), 2 alkali light chain subunits (MLC) and 2 regulatory light chain subunits (MLC-2). Interacts with GCSAM.

It localises to the cytoplasm. The protein localises to the myofibril. In terms of biological role, myosins are actin-based motor molecules with ATPase activity essential for muscle contraction. In Equus caballus (Horse), this protein is Myosin-2 (MYH2).